A 530-amino-acid polypeptide reads, in one-letter code: Ankyrin repeat domain-containing protein 53 (530 aa).

Over residues 1–15 (MASAGSTARRAGSGS) the composition is skewed to low complexity. Residues 1 to 99 (MASAGSTARR…PSPSKESDQT (99 aa)) form a disordered region. The span at 32–41 (PSGSMQQANK) shows a compositional bias: polar residues. 3 ANK repeats span residues 139 to 169 (KGFT…PVDL), 173 to 206 (NSQT…DLNA), and 210 to 239 (NGST…NVHA). Disordered regions lie at residues 323–360 (GHSL…VDAR) and 383–402 (PTMW…QISH). Polar residues-rich tracts occupy residues 326–341 (LVSN…LSKT) and 386–402 (WNVS…QISH).

In terms of assembly, interacts with PSRC1; recruited by PSRC1 to the spindle during mitosis. Post-translationally, phosphorylated during mitosis.

The protein localises to the cytoplasm. It localises to the cytoskeleton. Its subcellular location is the spindle. It is found in the spindle pole. Its function is as follows. Required for normal progression through mitosis. Involved in chromosome alignment and cytokinesis via regulation of microtubules polymerization. The chain is Ankyrin repeat domain-containing protein 53 (ANKRD53) from Homo sapiens (Human).